We begin with the raw amino-acid sequence, 583 residues long: Leucine aminopeptidase 2, chloroplastic (583 aa).

Residues 1 to 70 constitute a chloroplast transit peptide; that stretch reads MAVTLVTSFA…ISHATLGLTQ (70 aa). 2 residues coordinate Mn(2+): lysine 351 and aspartate 356. Lysine 363 is a catalytic residue. The Mn(2+) site is built by aspartate 376, aspartate 436, and glutamate 438. Arginine 440 is an active-site residue.

The protein belongs to the peptidase M17 family. In terms of assembly, homohexamer (dimer of homotrimers). It depends on Mn(2+) as a cofactor.

The protein resides in the plastid. The protein localises to the chloroplast. The enzyme catalyses Release of an N-terminal amino acid, Xaa-|-Yaa-, in which Xaa is preferably Leu, but may be other amino acids including Pro although not Arg or Lys, and Yaa may be Pro. Amino acid amides and methyl esters are also readily hydrolyzed, but rates on arylamides are exceedingly low.. It catalyses the reaction Release of N-terminal proline from a peptide.. Its function is as follows. Presumably involved in the processing and regular turnover of intracellular proteins. Catalyzes the removal of unsubstituted N-terminal amino acids from various peptides. Possesses leucine aminopeptidase activity against the model substrate leucine-amido methyl coumarin. Does not seem to possess Cys-Gly dipeptidase activity. In terms of biological role, functions as a molecular chaperone to protect proteins from heat-induced damage. The sequence is that of Leucine aminopeptidase 2, chloroplastic from Arabidopsis thaliana (Mouse-ear cress).